The sequence spans 345 residues: uncharacterized protein (345 aa).

Met1 is a domain (TBDR plug). Positions 1–345 (MDLGPIYNTR…EVILNTKIEF (345 aa)) constitute a TBDR beta-barrel domain. Positions 328–345 (PVALGYAREVILNTKIEF) match the TonB C-terminal box motif.

Belongs to the TonB-dependent receptor family.

Its subcellular location is the cell outer membrane. This is an uncharacterized protein from Haemophilus influenzae (strain ATCC 51907 / DSM 11121 / KW20 / Rd).